We begin with the raw amino-acid sequence, 354 residues long: Guanine nucleotide-binding protein G(t) subunit alpha-3 (354 aa).

The interval 1-26 is disordered; the sequence is MGIGISSESKESAKRSKELEKKLQED. A lipid anchor (N-myristoyl glycine) is attached at Gly2. Residues 8-26 are compositionally biased toward basic and acidic residues; that stretch reads ESKESAKRSKELEKKLQED. In terms of domain architecture, G-alpha spans 32–354; that stretch reads RTVKLLLLGA…KENLKDCGLF (323 aa). The interval 35 to 48 is G1 motif; the sequence is KLLLLGAGESGKST. GTP-binding positions include 40–47, 175–181, 200–204, 269–272, and Ala326; these read GAGESGKS, LHSRVKT, DVGGQ, and NKKD. Residues Ser47 and Thr181 each contribute to the Mg(2+) site. The interval 173-181 is G2 motif; the sequence is DVLHSRVKT. The interval 196 to 205 is G3 motif; the sequence is FRMFDVGGQR. A G4 motif region spans residues 265 to 272; sequence VLFLNKKD. Residues 324-329 are G5 motif; the sequence is TCATDT.

Belongs to the G-alpha family. G(i/o/t/z) subfamily. As to quaternary structure, g proteins are composed of 3 units; alpha, beta and gamma, respectively GNAT3, GNB1 and GNG13 for Gustducin heterotrimer for bitter taste transduction. The alpha chain contains the guanine nucleotide binding site. Component of the TAS2R14-GNAT3 complex, consisting of TAS2R14, GNAT3, GNB1 and GNG2; within the complex interacts with TAS2R14; this complex plays a role in the perception of bitterness. Gustducin heterotrimer may also be composed of GNAT3, GNB3 and GNG13. Expressed in epithelial cells of taste buds of the circumvallate, foliate and fungiform. Detected in various region of the respiratory track. Expressed also in spermatozoa.

The protein resides in the cytoplasm. Functionally, guanine nucleotide-binding protein (G protein) alpha subunit playing a prominent role in bitter and sweet taste transduction as well as in umami (monosodium glutamate, monopotassium glutamate, and inosine monophosphate) taste transduction. In Bos taurus (Bovine), this protein is Guanine nucleotide-binding protein G(t) subunit alpha-3 (GNAT3).